The following is a 130-amino-acid chain: Large ribosomal subunit protein bL21 (130 aa).

The tract at residues 110-130 (KTAAQPAADEAVAANEVDSEA) is disordered. The segment covering 112 to 130 (AAQPAADEAVAANEVDSEA) has biased composition (low complexity).

This sequence belongs to the bacterial ribosomal protein bL21 family. Part of the 50S ribosomal subunit. Contacts protein L20.

Functionally, this protein binds to 23S rRNA in the presence of protein L20. In Cyanothece sp. (strain PCC 7425 / ATCC 29141), this protein is Large ribosomal subunit protein bL21.